The following is a 295-amino-acid chain: MVDSVYRTRSLGVAAEGLPDQYADGEAARVWQLYIGDTRSRTSEYKTWLLGLLRQHGCRRVLDVACGTGVDSIMLVEEGFSVTSVDASDKMLKYALKERWNRRHEPAFDKWVIEEANWMTLDKDVPQPAGGGFDAVICLGNSFAHLPDCKGDQSEHRQALKNIASMVRTGGLLVIDHRNYDHILSTGCAPPGKNIYYKSDLTKDVTTSVLTVNNKAHMVTLDYTVQVPAAGQDGPPSLSKFRLSYYPHCLAPFTELLRAAFEGKCQHSVLGDFKPYQPGQAYVPCYFIHVLKRTA.

Residues Ser-4 and Tyr-6 each coordinate (6S)-5-methyl-5,6,7,8-tetrahydrofolate. Ser-10 is subject to Phosphoserine. S-adenosyl-L-methionine-binding residues include Tyr-22, Trp-31, Tyr-34, and Arg-41. A Phosphotyrosine modification is found at Tyr-34. Lys-46 carries the N6-succinyllysine modification. Residues Ala-65, 86 to 88, 117 to 118, 139 to 142, and Arg-178 contribute to the S-adenosyl-L-methionine site; these read DAS, NW, and LGNS. N6-succinyllysine occurs at positions 193, 198, and 203. His-217 provides a ligand contact to (6S)-5-methyl-5,6,7,8-tetrahydrofolate. Residue Tyr-223 coordinates S-adenosyl-L-methionine. Arg-242 lines the (6S)-5-methyl-5,6,7,8-tetrahydrofolate pocket.

This sequence belongs to the class I-like SAM-binding methyltransferase superfamily. Glycine N-methyltransferase family. In terms of assembly, homotetramer. As to expression, abundant in liver.

The protein resides in the cytoplasm. The enzyme catalyses glycine + S-adenosyl-L-methionine = sarcosine + S-adenosyl-L-homocysteine + H(+). Inhibited by 5-methyltetrahydrofolate monoglutamate and by 5-methyltetrahydrofolate pentaglutamate, inhibition is much more effective by the pentaglutamate form than by the monoglutamate form. Two molecules of 5-methyltetrahydrofolate are bound per tetramer. The binding sites are localized between subunits. Inhibitor binding may preclude movements of the polypeptide chain that are necessary for enzyme activity. Catalyzes the methylation of glycine by using S-adenosylmethionine (AdoMet) to form N-methylglycine (sarcosine) with the concomitant production of S-adenosylhomocysteine (AdoHcy), a reaction regulated by the binding of 5-methyltetrahydrofolate. Plays an important role in the regulation of methyl group metabolism by regulating the ratio between S-adenosyl-L-methionine and S-adenosyl-L-homocysteine. This chain is Glycine N-methyltransferase (GNMT), found in Oryctolagus cuniculus (Rabbit).